The following is a 427-amino-acid chain: MMTMRIAMISIHTSPLQQPGSGDAGGMNVYIISIARELARRGVDVDIYTRATRPSQGDVVEVESGLRVINIVAGPYEGLSKEELPTQLAAFAGGVVQFAKCHHMRYDVIHSHYWLSGQVGWLLRDLWNIPLVHTAHTLAAVKNAHRSAGDTEESEARRICEQQLVDNADILVVNTPEETNDLVRHYDANPDSVAVIAPGANVELFTPGTQRNTEQSRRCLGIPLHTKVMAFVGRLQQFKGPEVLLRAVAEMLERDPDRDMRVIMCGGPSGAAATVEHYIELTRSLGIAHRVRFLDPRPPEELVSVYQAADVVAVPSYNESFGLVAMEAQASGTPVVAARVGGLPIAVVDGETGVLVDGHDPIMWADALEQLLDDDPTRQQMGVAAVEHAANFTWAAAAEKLESVYGDAAMLDVAQCHDRYAAGSDRA.

H12 contributes to the 1D-myo-inositol 3-phosphate binding site. UDP-N-acetyl-alpha-D-glucosamine is bound by residues Q18–P19 and G26. 1D-myo-inositol 3-phosphate is bound by residues D23–N28, K81, Y113, T137, and R157. R234, K239, and R297 together coordinate UDP-N-acetyl-alpha-D-glucosamine. Positions 306, 307, and 309 each coordinate Mg(2+). Residues E319 and E327 each coordinate UDP-N-acetyl-alpha-D-glucosamine. T333 provides a ligand contact to Mg(2+).

Belongs to the glycosyltransferase group 1 family. MshA subfamily. Homodimer.

The catalysed reaction is 1D-myo-inositol 3-phosphate + UDP-N-acetyl-alpha-D-glucosamine = 1D-myo-inositol 2-acetamido-2-deoxy-alpha-D-glucopyranoside 3-phosphate + UDP + H(+). Its function is as follows. Catalyzes the transfer of a N-acetyl-glucosamine moiety to 1D-myo-inositol 3-phosphate to produce 1D-myo-inositol 2-acetamido-2-deoxy-glucopyranoside 3-phosphate in the mycothiol biosynthesis pathway. The polypeptide is D-inositol 3-phosphate glycosyltransferase (Corynebacterium diphtheriae (strain ATCC 700971 / NCTC 13129 / Biotype gravis)).